The following is a 316-amino-acid chain: MTNEFHHVTVLLHETVDMLDIKPDGIYVDATLGGAGHSSYLLSQLSEKGHLYCFDQDQKAIDNAQVRLKDYIDKGMVTFIKDNFRNLKSNLEALGVSEIDGILYDLGVSSPQLDERERGFSYKQDAKLDMRMNEEASLTAYDVVNTYPYNDLVRIFFKYGEDKFSKQIARKIEQARQVKPIETTTELAEIIKSAKPAKELKKKGHPAKQIFQAIRIEVNDELGAADESIQEALDLLAVDGRISVITFHSLEDRLTKQLFKEASTVDVPKGLPFIPEDLQPKVALVNRKPILPSQEELEANNRSHSAKLRVAKKIRK.

S-adenosyl-L-methionine contacts are provided by residues 35-37 (AGH), D55, F84, D105, and Q112.

It belongs to the methyltransferase superfamily. RsmH family.

The protein localises to the cytoplasm. It catalyses the reaction cytidine(1402) in 16S rRNA + S-adenosyl-L-methionine = N(4)-methylcytidine(1402) in 16S rRNA + S-adenosyl-L-homocysteine + H(+). Specifically methylates the N4 position of cytidine in position 1402 (C1402) of 16S rRNA. The sequence is that of Ribosomal RNA small subunit methyltransferase H from Streptococcus thermophilus (strain CNRZ 1066).